A 173-amino-acid chain; its full sequence is Glycine cleavage system H protein, mitochondrial (173 aa).

The transit peptide at 1-48 directs the protein to the mitochondrion; sequence MALRVVRSVRALLCTLRAVPSPAAPCPPRPWQLGVGAVRTLRTGPALL. Residues 66 to 148 enclose the Lipoyl-binding domain; sequence IGTVGISNFA…YEDGWLIKMT (83 aa). Position 107 is an N6-lipoyllysine (lysine 107).

It belongs to the GcvH family. In terms of assembly, interacts with GLDC. The glycine cleavage system is composed of four proteins: P (GLDC), T (GCST), L (DLD) and H (GCSH). Requires (R)-lipoate as cofactor.

It localises to the mitochondrion. In terms of biological role, the glycine cleavage system catalyzes the degradation of glycine. The H protein (GCSH) shuttles the methylamine group of glycine from the P protein (GLDC) to the T protein (GCST). Has a pivotal role in the lipoylation of enzymes involved in cellular energetics such as the mitochondrial dihydrolipoyllysine-residue acetyltransferase component of pyruvate dehydrogenase complex (DLAT), and the mitochondrial dihydrolipoyllysine-residue succinyltransferase component of 2-oxoglutarate dehydrogenase complex (DLST). The polypeptide is Glycine cleavage system H protein, mitochondrial (Homo sapiens (Human)).